A 515-amino-acid polypeptide reads, in one-letter code: Vacuolar segregation protein PEP7 (515 aa).

The C2H2-type zinc-finger motif lies at 6–29 (VSCPICLRKFDNLQALNAHLDVEH). Positions 36–58 (DSLGSNDSRLVNGKQKKARSVDS) are disordered. The FYVE-type 1; atypical zinc-finger motif lies at 72 to 137 (KKGKSCCHTC…CCHDCFVTKP (66 aa)). The Zn(2+) site is built by cysteine 78, cysteine 81, cysteine 94, cysteine 97, cysteine 102, histidine 105, cysteine 129, cysteine 132, cysteine 221, cysteine 224, cysteine 237, cysteine 240, cysteine 245, cysteine 252, cysteine 289, and cysteine 292. The FYVE-type 2 zinc-finger motif lies at 215 to 297 (DRSVLFCNIC…LCSHCIDMLF (83 aa)).

Interacts with VPS21, VPS45, PEP3 and PEP5.

The protein resides in the vacuole membrane. Its function is as follows. Required for vacuole segregation and vacuole protein sorting. Possibly part of a complex which tethers the vacuole membrane to microtubules, either directly or via kinesin or dynein-like motor proteins. Probably functions in several interorganelle traffic pathways. The sequence is that of Vacuolar segregation protein PEP7 (PEP7) from Saccharomyces cerevisiae (strain ATCC 204508 / S288c) (Baker's yeast).